The chain runs to 152 residues: Regulator of G-protein signaling 21 (152 aa).

Positions 21–137 constitute an RGS domain; sequence NMDTLLANQA…LKSEIYKKLV (117 aa).

Expressed ubiquitously.

Functionally, inhibits signal transduction by increasing the GTPase activity of G protein alpha subunits thereby driving them into their inactive GDP-bound form. In Homo sapiens (Human), this protein is Regulator of G-protein signaling 21 (RGS21).